A 137-amino-acid chain; its full sequence is Photosystem II reaction center W protein, chloroplastic (137 aa).

The N-terminal 64 residues, 1–64, are a transit peptide targeting the chloroplast; it reads MATITASSSA…ETTTTTNKSM (64 aa). Residues 65–83 constitute a thylakoid transit peptide; it reads GASLLAAAAAATISNPAMA. Topologically, residues 84–103 are lumenal, thylakoid; the sequence is LVDERMSTEGTGLPFGLSNN. The chain crosses the membrane as a helical span at residues 104–123; it reads LLGWILFGVFGLIWALYFVY. Residues 124-137 lie on the Stromal side of the membrane; the sequence is ASGLEEDEESGLSL.

In terms of assembly, part of the photosystem II complex. PSII is composed of 1 copy each of membrane proteins PsbA, PsbB, PsbC, PsbD, numerous small proteins, at least 3 peripheral proteins of the oxygen-evolving complex and a large number of cofactors. It forms dimeric complexes.

The protein localises to the plastid. It localises to the chloroplast thylakoid membrane. Stabilizes dimeric photosystem II (PSII). In its absence no dimeric PSII accumulates and there is a reduction of monomeric PSII. This Spinacia oleracea (Spinach) protein is Photosystem II reaction center W protein, chloroplastic.